The sequence spans 193 residues: Ancillary SecYEG translocon subunit (193 aa).

Residues 1-8 (MLNISKKN) are Cytoplasmic-facing. The chain crosses the membrane as a helical span at residues 9 to 29 (IIFFILFFLIISLILFNWKYF). Over 30–193 (SLVNKENLES…MKLNELKEQN (164 aa)) the chain is Periplasmic.

Belongs to the YfgM family. In terms of assembly, interacts with the SecYEG translocon. Forms a complex with PpiD.

It localises to the cell inner membrane. May mediate protein transfer from the SecYEG translocon to the periplasmic chaperone network via its periplasmic C-terminal region. In Buchnera aphidicola subsp. Acyrthosiphon pisum (strain APS) (Acyrthosiphon pisum symbiotic bacterium), this protein is Ancillary SecYEG translocon subunit.